We begin with the raw amino-acid sequence, 976 residues long: Probable outer membrane protein PmpA (976 aa).

The N-terminal stretch at 1–50 is a signal peptide; sequence MNQVIKTIALCYQKYISRASNKTFSIHNTLSLSLLPKCLLGSLIIYTSHA. Residues 671–976 form the Autotransporter domain; that stretch reads GNAIPNSLWS…SLSCGGYVGF (306 aa).

The protein belongs to the PMP outer membrane protein family.

The protein resides in the secreted. It is found in the cell wall. Its subcellular location is the cell outer membrane. This chain is Probable outer membrane protein PmpA (pmpA), found in Chlamydia muridarum (strain MoPn / Nigg).